Consider the following 639-residue polypeptide: Polypeptide N-acetylgalactosaminyltransferase 15 (639 aa).

At 1–11 (MLLRKRYRHRP) the chain is on the cytoplasmic side. A helical; Signal-anchor for type II membrane protein membrane pass occupies residues 12-34 (CRLQFLLLLLMLGCVLMMVAMLH). Residues 35-639 (PPHHTLHQTV…FDQINAVDER (605 aa)) are Lumenal-facing. Residues 106–155 (RNQSQGRRGGSYRLIKQPRRQDKEAPKRDWGADEDGEVSEEEELTPFSLD) are disordered. Asparagine 107 is a glycosylation site (N-linked (GlcNAc...) asparagine). Residues 124-136 (RRQDKEAPKRDWG) are compositionally biased toward basic and acidic residues. Over residues 137–149 (ADEDGEVSEEEEL) the composition is skewed to acidic residues. 5 cysteine pairs are disulfide-bonded: cysteine 181–cysteine 412, cysteine 403–cysteine 482, cysteine 517–cysteine 536, cysteine 562–cysteine 575, and cysteine 603–cysteine 620. Residues 190–299 (LPTASVILCF…PGWLEPLLSR (110 aa)) are catalytic subdomain A. Substrate-binding residues include aspartate 231 and arginine 260. Mn(2+) contacts are provided by aspartate 283, histidine 285, and histidine 417. Positions 358–420 (PIRSPVVPGE…PCSRVGHIYQ (63 aa)) are catalytic subdomain B. The region spanning 504 to 631 (SFSGKLHNTG…GKARQQWRFD (128 aa)) is the Ricin B-type lectin domain. N-linked (GlcNAc...) asparagine glycosylation occurs at asparagine 574.

Belongs to the glycosyltransferase 2 family. GalNAc-T subfamily. Requires Mn(2+) as cofactor. Widely expressed. Highly expressed in small intestine, placenta, spleen, cerebral cortex and ovary. Expressed at intermediate level in uterus, mammary gland, stomach, cerebellum and whole brain. Weakly expressed in fetal brain, bone marrow, thyroid gland, thymus, heart, skeletal muscle, lung, liver, colon, pancreas, kidney and testis. Not expressed in leukocyte. Expressed in both normal and osteoarthritic cartilage. Expressed at low level in chondrocytes in all zones of both normal and osteoarthritic cartilage.

Its subcellular location is the golgi apparatus membrane. The enzyme catalyses L-seryl-[protein] + UDP-N-acetyl-alpha-D-galactosamine = a 3-O-[N-acetyl-alpha-D-galactosaminyl]-L-seryl-[protein] + UDP + H(+). It carries out the reaction L-threonyl-[protein] + UDP-N-acetyl-alpha-D-galactosamine = a 3-O-[N-acetyl-alpha-D-galactosaminyl]-L-threonyl-[protein] + UDP + H(+). Its pathway is protein modification; protein glycosylation. Functionally, catalyzes the initial reaction in O-linked oligosaccharide biosynthesis, the transfer of an N-acetyl-D-galactosamine residue to a serine or threonine residue on the protein receptor. Although it displays a much weaker activity toward all substrates tested compared to GALNT2, it is able to transfer up to seven GalNAc residues to the Muc5AC peptide, suggesting that it can fill vicinal Thr/Ser residues in cooperation with other GALNT proteins. Prefers Muc1a as substrate. This Homo sapiens (Human) protein is Polypeptide N-acetylgalactosaminyltransferase 15 (GALNT15).